A 142-amino-acid polypeptide reads, in one-letter code: MNKTQSPSLNTNSHWYVIDAKNQTLGRISTHISNILRGKNKPSYTPYLDTGDYVIVINSAHVSVSGNKTNQKLYRRHSGQPGGLKVETFDQLQTRLPNRIIEKSVKGMLPKGPLGRKLFTKLKVYSGPIHPHVAQKPQEYIV.

Belongs to the universal ribosomal protein uL13 family. In terms of assembly, part of the 50S ribosomal subunit.

The protein localises to the plastid. It is found in the chloroplast. This chain is Large ribosomal subunit protein uL13c, found in Pyropia yezoensis (Susabi-nori).